A 262-amino-acid polypeptide reads, in one-letter code: 5'-nucleotidase SurE (262 aa).

A divalent metal cation contacts are provided by Asp-13, Asp-14, Ser-44, and Asn-97.

Belongs to the SurE nucleotidase family. It depends on a divalent metal cation as a cofactor.

The protein localises to the cytoplasm. The enzyme catalyses a ribonucleoside 5'-phosphate + H2O = a ribonucleoside + phosphate. Nucleotidase that shows phosphatase activity on nucleoside 5'-monophosphates. The protein is 5'-nucleotidase SurE of Myxococcus xanthus (strain DK1622).